Reading from the N-terminus, the 92-residue chain is Small ribosomal subunit protein bS18A (92 aa).

The protein belongs to the bacterial ribosomal protein bS18 family. As to quaternary structure, part of the 30S ribosomal subunit. Forms a tight heterodimer with protein bS6.

Functionally, binds as a heterodimer with protein bS6 to the central domain of the 16S rRNA, where it helps stabilize the platform of the 30S subunit. The chain is Small ribosomal subunit protein bS18A from Cupriavidus pinatubonensis (strain JMP 134 / LMG 1197) (Cupriavidus necator (strain JMP 134)).